Here is a 657-residue protein sequence, read N- to C-terminus: Pyoverdine export ATP-binding/permease protein PvdT (657 aa).

An ABC transporter domain is found at 6-245 (IDLRGIRKSY…RSVNPAALQA (240 aa)). 43 to 50 (GASGSGKS) contributes to the ATP binding site. A run of 4 helical transmembrane segments spans residues 285–305 (ALTL…LAVG), 539–559 (IAAI…LMTV), 590–610 (LSVV…AALL), and 620–640 (LPAV…FGFM).

Belongs to the ABC transporter superfamily. Macrolide exporter (TC 3.A.1.122) family. Part of the tripartite efflux system PvdRT-OpmQ, which is composed of an inner membrane component with both ATPase and permease domains, PvdT, a periplasmic membrane fusion protein, PvdR, and an outer membrane component, OpmQ.

It localises to the cell inner membrane. Part of the tripartite efflux system PvdRT-OpmQ required for the secretion into the extracellular milieu of the siderophore pyoverdine (PVD), which is involved in iron acquisition. This subunit binds PVD and drives its secretion by hydrolyzing ATP. The system is responsible for export of newly synthesized PVD after the final steps of biosynthesis have taken place in the periplasm. It is also responsible for recycling of PVD after internalization of ferri-PVD into the periplasm by the outer-membrane receptor FpvA and release of iron from PVD, thus making PVD available for new cycles of iron uptake. This Pseudomonas syringae pv. syringae (strain B728a) protein is Pyoverdine export ATP-binding/permease protein PvdT.